A 409-amino-acid polypeptide reads, in one-letter code: FBD-associated F-box protein At4g10400 (409 aa).

An F-box domain is found at 1–47; that stretch reads MDRISGLPDEVLVKILSFVPTKVAVSTSILSKRWEFLWMWLTKLKFG. The 50-residue stretch at 330–379 folds into the FBD domain; it reads SWNQPSIVPECMLSSLQKFTWFKYLGRPQDRDIAVYILKNACRLRTATIK.

This Arabidopsis thaliana (Mouse-ear cress) protein is FBD-associated F-box protein At4g10400.